Consider the following 66-residue polypeptide: uncharacterized protein (66 aa).

This is an uncharacterized protein from Vaccinia virus (strain Copenhagen) (VACV).